The chain runs to 335 residues: uncharacterized protein (335 aa).

3 Solcar repeats span residues 22-129 (VKPI…LLPL), 134-227 (GFPA…IRLF), and 244-327 (KDLY…TKKY). 6 helical membrane-spanning segments follow: residues 28-48 (MLSACVGSVITTLTVTPLDVV), 104-123 (GLVPSLTMLLPANTVQFLGY), 133-154 (WGFPAAAAIAGASARTISATIV), 195-219 (GILNLWSGVSVTLWRDVPFSAFYWW), 246-263 (LYINFVSGGISGTLATLL), and 307-323 (CVKVAPSCAIMISSYHL).

Belongs to the mitochondrial carrier (TC 2.A.29) family.

The protein resides in the mitochondrion inner membrane. This is an uncharacterized protein from Schizosaccharomyces pombe (strain 972 / ATCC 24843) (Fission yeast).